The primary structure comprises 339 residues: UDP-3-O-acylglucosamine N-acyltransferase (339 aa).

Residue His248 is the Proton acceptor of the active site.

This sequence belongs to the transferase hexapeptide repeat family. LpxD subfamily. As to quaternary structure, homotrimer.

It carries out the reaction a UDP-3-O-[(3R)-3-hydroxyacyl]-alpha-D-glucosamine + a (3R)-hydroxyacyl-[ACP] = a UDP-2-N,3-O-bis[(3R)-3-hydroxyacyl]-alpha-D-glucosamine + holo-[ACP] + H(+). It participates in bacterial outer membrane biogenesis; LPS lipid A biosynthesis. In terms of biological role, catalyzes the N-acylation of UDP-3-O-acylglucosamine using 3-hydroxyacyl-ACP as the acyl donor. Is involved in the biosynthesis of lipid A, a phosphorylated glycolipid that anchors the lipopolysaccharide to the outer membrane of the cell. The protein is UDP-3-O-acylglucosamine N-acyltransferase of Caulobacter vibrioides (strain NA1000 / CB15N) (Caulobacter crescentus).